Reading from the N-terminus, the 339-residue chain is MNIIFWGTPIFCVPILEKLLKSNHNVLAVITQPDRRRGRGNKVLPSPIKQKALEENLPIYTPVNITKEKDIQAKIKQYNADIFVVVAFGQILPKSVLKLPKYGCWNIHASLLPRWRGAAPIQWSILSGDSETGVGLMAMEEGLDTGAVLLEKKLKLKLLENAEQLSQRLKDLSCNLIIEGIEILEKVREQSQSLSKLNLTKQEDINRTYSYARLLMKEDYLINWNDSGYNIHKQILGLYPNCYTYINSKRLKVLESIPINNKYDEFLDFRYKDIILKSQSIINNNGLIIDIIENIGIIVQTKDVPLLITKVKLEGKKESSQNALIQQLTLTNSQNKLGE.

A (6S)-5,6,7,8-tetrahydrofolate-binding site is contributed by 110 to 113 (SLLP).

The protein belongs to the Fmt family.

It catalyses the reaction L-methionyl-tRNA(fMet) + (6R)-10-formyltetrahydrofolate = N-formyl-L-methionyl-tRNA(fMet) + (6S)-5,6,7,8-tetrahydrofolate + H(+). Its function is as follows. Attaches a formyl group to the free amino group of methionyl-tRNA(fMet). The formyl group appears to play a dual role in the initiator identity of N-formylmethionyl-tRNA by promoting its recognition by IF2 and preventing the misappropriation of this tRNA by the elongation apparatus. The chain is Methionyl-tRNA formyltransferase from Prochlorococcus marinus (strain SARG / CCMP1375 / SS120).